Consider the following 846-residue polypeptide: Putative transcriptional regulator tpeD (846 aa).

Residues 104-166 (KHQSECWQHF…NCRKSVPVSK (63 aa)) form a BED-type; degenerate zinc finger. The interval 734–846 (RAREERDAQQ…RDEDFVYETP (113 aa)) is disordered. The segment covering 756–769 (PISDSEEAESEDES) has biased composition (acidic residues). A compositionally biased stretch (low complexity) spans 773–786 (PQSPQASQARSQRS). Residues 797–809 (PLIELDGNEEDEV) are compositionally biased toward acidic residues.

The protein localises to the nucleus. In terms of biological role, putative transcriptional regulator; part of the gene cluster that mediates the biosynthesis of polyesters containing 2,4-dihydroxy-6-(2-hydroxypropyl)benzoate and 3-hydroxybutyrate moieties, such as talapolyester G, 15G256beta and 15G256beta-2; as well as to oxidized derivatives such as 15G256alpha. This Talaromyces stipitatus (strain ATCC 10500 / CBS 375.48 / QM 6759 / NRRL 1006) (Penicillium stipitatum) protein is Putative transcriptional regulator tpeD.